The following is a 578-amino-acid chain: SWR1 complex bromodomain subunit bdf1 (578 aa).

Over residues 1–18 (MSSESRENEVKAETKDEI) the composition is skewed to basic and acidic residues. Disordered stretches follow at residues 1 to 89 (MSSE…PPPQ), 192 to 254 (DAEQ…RKNN), and 504 to 578 (ADSS…SESA). The span at 22-36 (GSPQLNGDNNIQSSD) shows a compositional bias: polar residues. Composition is skewed to basic and acidic residues over residues 37–52 (GHNDENEESLSRKRDS) and 60–77 (LKQEEKESMPKKEPEPTV). Residues 84–190 (GMPPPQQKYC…EVFERQLKQL (107 aa)) enclose the Bromo 1 domain. Residues 219 to 242 (NSSVSSTSASVAASTAPKAASPAV) are compositionally biased toward low complexity. A phosphoserine mark is found at Ser-221, Ser-223, and Ser-224. Thr-225 bears the Phosphothreonine mark. Ser-226 and Ser-239 each carry phosphoserine. One can recognise a Bromo 2 domain in the interval 251-360 (RKNNSQMRFC…NVFKEKWEAR (110 aa)). Residues 430 to 510 (RRDLTKEYGP…KPDADSSEPA (81 aa)) enclose the NET domain. The residue at position 511 (Ser-511) is a Phosphoserine. Residues 526-537 (VLSETEQAEKIR) are compositionally biased toward basic and acidic residues. The segment covering 550 to 563 (TSPTSPESNNAANV) has biased composition (polar residues). The span at 566-578 (SESDNESESSESA) shows a compositional bias: acidic residues.

The protein belongs to the BET family. As to quaternary structure, component of the SWR1 chromatin-remodeling complex.

It localises to the nucleus. In terms of biological role, component of the SWR1 complex which mediates the ATP-dependent exchange of histone H2A for the H2A variant HZT1 leading to transcriptional regulation of selected genes by chromatin remodeling. This is SWR1 complex bromodomain subunit bdf1 (bdf1) from Schizosaccharomyces pombe (strain 972 / ATCC 24843) (Fission yeast).